We begin with the raw amino-acid sequence, 256 residues long: Myeloblastin (256 aa).

The signal sequence occupies residues Met1–Ala25. A propeptide spanning residues Ala26–Glu27 is cleaved from the precursor. Residues Ile28–Arg248 enclose the Peptidase S1 domain. Cysteines 56 and 72 form a disulfide. Residues His71 and Asp118 each act as charge relay system in the active site. N-linked (GlcNAc...) asparagine glycans are attached at residues Asn129 and Asn174. 3 cysteine pairs are disulfide-bonded: Cys152–Cys209, Cys182–Cys188, and Cys199–Cys224. The Charge relay system role is filled by Ser203. Residues Arg249–Pro256 constitute a propeptide that is removed on maturation.

The protein belongs to the peptidase S1 family. Elastase subfamily. May form dimers. Interacts with CD177; the interaction tethers PRTN3 to the cell surface; the interaction is direct. Interacts with SERPINB1. Interacts with ADGRG3. As to expression, expressed in polymorphonuclear leukocytes (at protein level). Expressed in neutrophils (at protein level). Expressed in differentiating neutrophils.

The protein localises to the cytoplasmic granule. Its subcellular location is the secreted. It is found in the cell membrane. The protein resides in the membrane raft. It catalyses the reaction Hydrolysis of proteins, including elastin, by preferential cleavage: -Ala-|-Xaa- &gt; -Val-|-Xaa-.. Inhibited by phenylmethanesulfonyl fluoride (PMSF) and diisopropyl fluorophosphate (DFP). Its function is as follows. Serine protease that degrades elastin, fibronectin, laminin, vitronectin, and collagen types I, III, and IV (in vitro). By cleaving and activating receptor F2RL1/PAR-2, enhances endothelial cell barrier function and thus vascular integrity during neutrophil transendothelial migration. Plays a role in neutrophil transendothelial migration, probably when associated with CD177. Triggers inflammatory processes in neutrophils by interacting with ADGRG3 upstream of F2RL1/PAR2 activation. In Homo sapiens (Human), this protein is Myeloblastin (PRTN3).